Reading from the N-terminus, the 754-residue chain is Condensin complex subunit 2 (754 aa).

Positions 104–149 are disordered; the sequence is LAQRKTNGASNGDDSNGGNGEGLGGDSDEANIEIDPLTGMPISNDP. Over residues 118–128 the composition is skewed to gly residues; the sequence is SNGGNGEGLGG. Position 245 is a phosphoserine (serine 245). The disordered stretch occupies residues 359 to 379; the sequence is CYPDENHDNTSHDEQDDDNVN. The segment covering 362-371 has biased composition (basic and acidic residues); that stretch reads DENHDNTSHD. Position 548 is a phosphoserine (serine 548). The interval 665–688 is disordered; the sequence is HDSRKNREQSSNDSETHTEDESTK.

The protein belongs to the CND2 (condensin subunit 2) family. As to quaternary structure, component of the condensin complex, which contains the SMC2 and SMC4 heterodimer, and three non SMC subunits that probably regulate the complex: BRN1, YCS4 and YCG1/YCS5.

It is found in the nucleus. Its subcellular location is the cytoplasm. It localises to the chromosome. In terms of biological role, regulatory subunit of the condensin complex, a complex required for conversion of interphase chromatin into mitotic-like condense chromosomes. The condensin complex probably introduces positive supercoils into relaxed DNA in the presence of type I topoisomerases and converts nicked DNA into positive knotted forms in the presence of type II topoisomerases. The condensin complex probably also plays a role during interphase. The chain is Condensin complex subunit 2 (BRN1) from Saccharomyces cerevisiae (strain ATCC 204508 / S288c) (Baker's yeast).